The primary structure comprises 353 residues: Aromatic amino acid aminotransferase (353 aa).

Lys217 bears the N6-(pyridoxal phosphate)lysine mark.

It belongs to the class-II pyridoxal-phosphate-dependent aminotransferase family. In terms of assembly, homodimer. Requires pyridoxal 5'-phosphate as cofactor.

It carries out the reaction an aromatic L-alpha-amino acid + 2-oxoglutarate = an aromatic oxo-acid + L-glutamate. Functionally, aminotransferase that catalyzes the conversion of aromatic amino acids and 2-oxoglutarate into corresponding aromatic oxo acids and L-glutamate. In Mycobacterium bovis (strain ATCC BAA-935 / AF2122/97), this protein is Aromatic amino acid aminotransferase.